We begin with the raw amino-acid sequence, 843 residues long: Protein P (843 aa).

The interval 1–177 is terminal protein domain (TP); that stretch reads MPLSYQHFRK…FCGSPYSWEQ (177 aa). The segment at 178 to 346 is spacer; that stretch reads DLQHGRLVFQ…YCLSHIVNLI (169 aa). Disordered stretches follow at residues 219 to 249 and 290 to 316; these read RKSR…RIHP and STSK…RSQS. The segment covering 290-299 has biased composition (polar residues); that stretch reads STSKGHSSSG. The interval 347 to 690 is polymerase/reverse transcriptase domain (RT); it reads EDWGPCAEHG…YMTLYPVARQ (344 aa). Positions 357 to 600 constitute a Reverse transcriptase domain; it reads EHRIRTPRTP…YSLNFMGYVI (244 aa). Mg(2+)-binding residues include D429, D551, and D552.

The protein belongs to the hepadnaviridae P protein family.

It catalyses the reaction DNA(n) + a 2'-deoxyribonucleoside 5'-triphosphate = DNA(n+1) + diphosphate. The enzyme catalyses Endonucleolytic cleavage to 5'-phosphomonoester.. With respect to regulation, activated by host HSP70 and HSP40 in vitro to be able to bind the epsilon loop of the pgRNA. Because deletion of the RNase H region renders the protein partly chaperone-independent, the chaperones may be needed indirectly to relieve occlusion of the RNA-binding site by this domain. Inhibited by several reverse-transcriptase inhibitors: Lamivudine, Adefovir and Entecavir. Its function is as follows. Multifunctional enzyme that converts the viral RNA genome into dsDNA in viral cytoplasmic capsids. This enzyme displays a DNA polymerase activity that can copy either DNA or RNA templates, and a ribonuclease H (RNase H) activity that cleaves the RNA strand of RNA-DNA heteroduplexes in a partially processive 3'- to 5'-endonucleasic mode. Neo-synthesized pregenomic RNA (pgRNA) are encapsidated together with the P protein, and reverse-transcribed inside the nucleocapsid. Initiation of reverse-transcription occurs first by binding the epsilon loop on the pgRNA genome, and is initiated by protein priming, thereby the 5'-end of (-)DNA is covalently linked to P protein. Partial (+)DNA is synthesized from the (-)DNA template and generates the relaxed circular DNA (RC-DNA) genome. After budding and infection, the RC-DNA migrates in the nucleus, and is converted into a plasmid-like covalently closed circular DNA (cccDNA). The activity of P protein does not seem to be necessary for cccDNA generation, and is presumably released from (+)DNA by host nuclear DNA repair machinery. This chain is Protein P, found in Homo sapiens (Human).